Reading from the N-terminus, the 108-residue chain is Small ribosomal subunit protein eS25y (108 aa).

A disordered region spans residues 1 to 36; the sequence is MAPKKDKVPPPSSKPAKSGGGKQKKKKWSKGKQKEK. Residues 22 to 31 show a composition bias toward basic residues; sequence KQKKKKWSKG.

This sequence belongs to the eukaryotic ribosomal protein eS25 family.

The chain is Small ribosomal subunit protein eS25y (RPS25B) from Arabidopsis thaliana (Mouse-ear cress).